The primary structure comprises 250 residues: Serine/arginine-rich splicing factor RS31A (250 aa).

2 consecutive RRM domains span residues R2–D74 and K95–R166. Residues E170–G250 form a disordered region. A compositionally biased stretch (basic residues) spans G177–R191. Phosphoserine occurs at positions 183, 185, 201, 218, and 243. Over residues P192 to R230 the composition is skewed to basic and acidic residues.

Belongs to the splicing factor SR family. RS subfamily. As to quaternary structure, component of the spliceosome. Interacts with MOS14.

It is found in the nucleus speckle. The protein localises to the nucleus. It localises to the nucleoplasm. Functionally, probably involved in intron recognition and spliceosome assembly. This chain is Serine/arginine-rich splicing factor RS31A (RS31A), found in Arabidopsis thaliana (Mouse-ear cress).